The chain runs to 72 residues: ATP synthase protein 8 (72 aa).

A helical transmembrane segment spans residues W16–V36.

Belongs to the ATPase protein 8 family. As to quaternary structure, F-type ATPases have 2 components, CF(1) - the catalytic core - and CF(0) - the membrane proton channel.

It localises to the mitochondrion membrane. In terms of biological role, mitochondrial membrane ATP synthase (F(1)F(0) ATP synthase or Complex V) produces ATP from ADP in the presence of a proton gradient across the membrane which is generated by electron transport complexes of the respiratory chain. F-type ATPases consist of two structural domains, F(1) - containing the extramembraneous catalytic core and F(0) - containing the membrane proton channel, linked together by a central stalk and a peripheral stalk. During catalysis, ATP synthesis in the catalytic domain of F(1) is coupled via a rotary mechanism of the central stalk subunits to proton translocation. Part of the complex F(0) domain. Minor subunit located with subunit a in the membrane. The protein is ATP synthase protein 8 (MTATP8) of Metridium senile (Brown sea anemone).